The chain runs to 504 residues: Activin receptor type-1 (504 aa).

The signal sequence occupies residues 1-16 (MALPVLLLLLALPSRS). The Extracellular segment spans residues 17-119 (VQDEELKLNE…EAAGYSMETL (103 aa)). N-linked (GlcNAc...) asparagine glycosylation occurs at asparagine 94. The chain crosses the membrane as a helical span at residues 120–140 (IIVILAPVVVLVIFSVVAVLI). Residues 141-504 (IRRIQKNHME…NSLDKLKADC (364 aa)) lie on the Cytoplasmic side of the membrane. The 30-residue stretch at 173 to 202 (STLADLLDHSCTSGSGSGLPFLVQRTVARQ) folds into the GS domain. The Protein kinase domain occupies 203–497 (ITLVECVGKG…KTLTKIDNSL (295 aa)). Residues 209–217 (VGKGRYGEV) and lysine 230 each bind ATP. Aspartate 331 acts as the Proton acceptor in catalysis.

Belongs to the protein kinase superfamily. TKL Ser/Thr protein kinase family. TGFB receptor subfamily. It depends on Mg(2+) as a cofactor. Mn(2+) is required as a cofactor.

The protein localises to the membrane. The catalysed reaction is L-threonyl-[receptor-protein] + ATP = O-phospho-L-threonyl-[receptor-protein] + ADP + H(+). The enzyme catalyses L-seryl-[receptor-protein] + ATP = O-phospho-L-seryl-[receptor-protein] + ADP + H(+). On ligand binding, forms a receptor complex consisting of two type II and two type I transmembrane serine/threonine kinases. Type II receptors phosphorylate and activate type I receptors which autophosphorylate, then bind and activate SMAD transcriptional regulators. Receptor for activin. In Gallus gallus (Chicken), this protein is Activin receptor type-1 (ACVR1).